Consider the following 208-residue polypeptide: Photosystem I reaction center subunit II-1, chloroplastic (208 aa).

The N-terminal 45 residues, 1–45 (MATQAAGIFNSAITTAATSGVKKLHFFSTTHRPKSLSFTKTAIRA), are a transit peptide targeting the chloroplast. T48 carries the post-translational modification Phosphothreonine. The disordered stretch occupies residues 49–72 (DSSAAAAAAPATKEAPVGFTPPQL). Positions 50–64 (SSAAAAAAPATKEAP) are enriched in low complexity. The segment at 141–149 (RLRSKYKIT) is ferredoxin and ferredoxin-oxidoreductase binding.

The protein belongs to the PsaD family. In terms of assembly, interacts with PGRL1A and PGRL1B. Post-translationally, phosphorylated by a threonine specific thylakoid kinase in a light activated and redox-dependent manner.

The protein localises to the plastid. The protein resides in the chloroplast thylakoid membrane. Functionally, psaD can form complexes with ferredoxin and ferredoxin-oxidoreductase in photosystem I (PS I) reaction center. PSAD may encode the ferredoxin-docking protein. The protein is Photosystem I reaction center subunit II-1, chloroplastic (psaD1) of Arabidopsis thaliana (Mouse-ear cress).